A 37-amino-acid chain; its full sequence is Large ribosomal subunit protein bL36 (37 aa).

This sequence belongs to the bacterial ribosomal protein bL36 family.

This is Large ribosomal subunit protein bL36 from Micrococcus luteus (strain ATCC 4698 / DSM 20030 / JCM 1464 / CCM 169 / CCUG 5858 / IAM 1056 / NBRC 3333 / NCIMB 9278 / NCTC 2665 / VKM Ac-2230) (Micrococcus lysodeikticus).